We begin with the raw amino-acid sequence, 100 residues long: Vesicle-associated membrane protein 3 (100 aa).

An N-acetylserine modification is found at Ser-2. Over Ser-2–Lys-77 the chain is Cytoplasmic. The v-SNARE coiled-coil homology domain maps to Arg-14–Lys-74. Residues Lys-66, Lys-68, and Lys-77 each participate in a glycyl lysine isopeptide (Lys-Gly) (interchain with G-Cter in ubiquitin) cross-link. The chain crosses the membrane as a helical; Anchor for type IV membrane protein span at residues Met-78–Val-98. Residues Ser-99–Ser-100 lie on the Vesicular side of the membrane.

It belongs to the synaptobrevin family. As to quaternary structure, interacts with POPDC1 (via the C-terminus cytoplasmic tail). Interacts with BCAP31; involved in VAMP3 export from the endoplasmic reticulum. Interacts with BAIAP3; this interaction is increased in the presence of calcium. Interacts with PICALM. Ubiquitinated by RNF167 at Lys-66, Lys-68 and Lys-77, regulating the recycling endosome pathway. In terms of processing, (Microbial infection) Targeted and hydrolyzed by C.botulinum neurotoxin type B (BoNT/B, botB) which hydrolyzes the 59-Gln-|-Phe-60 bond and probably inhibits neurotransmitter release. Post-translationally, (Microbial infection) Targeted and hydrolyzed by C.botulinum neurotoxin type D (BoNT/D, botD) which hydrolyzes the 42-Lys-|-Leu-43 bond and probably inhibits neurotransmitter release. Note that humans are not known to be infected by C.botulinum type D. (Microbial infection) Targeted and hydrolyzed by C.botulinum neurotoxin type F (BoNT/F, botF) which hydrolyzes the 41-Gln-|-Lys-42 bond and probably inhibits neurotransmitter release.

The protein localises to the early endosome membrane. It localises to the recycling endosome membrane. The protein resides in the synapse. It is found in the synaptosome. SNARE involved in vesicular transport from the late endosomes to the trans-Golgi network. This Homo sapiens (Human) protein is Vesicle-associated membrane protein 3 (VAMP3).